Reading from the N-terminus, the 356-residue chain is DNA polymerase IV (356 aa).

The 182-residue stretch at 6 to 187 folds into the UmuC domain; that stretch reads IIHVDMDYFF…LDIGDFPGVG (182 aa). 2 residues coordinate Mg(2+): Asp10 and Asp105. Glu106 is an active-site residue.

Belongs to the DNA polymerase type-Y family. As to quaternary structure, monomer. Mg(2+) is required as a cofactor.

It localises to the cytoplasm. The catalysed reaction is DNA(n) + a 2'-deoxyribonucleoside 5'-triphosphate = DNA(n+1) + diphosphate. Its function is as follows. Poorly processive, error-prone DNA polymerase involved in untargeted mutagenesis. Copies undamaged DNA at stalled replication forks, which arise in vivo from mismatched or misaligned primer ends. These misaligned primers can be extended by PolIV. Exhibits no 3'-5' exonuclease (proofreading) activity. May be involved in translesional synthesis, in conjunction with the beta clamp from PolIII. This Staphylococcus saprophyticus subsp. saprophyticus (strain ATCC 15305 / DSM 20229 / NCIMB 8711 / NCTC 7292 / S-41) protein is DNA polymerase IV.